The primary structure comprises 551 residues: MTSSPTAAARTEGEAAPTVPTQVESGTAQRPGLAREMVAILDFGSQYSELIARRIRETKVYSEVLSYQTPIAEIRRLAPKGIILSGGPNSVYEAYAPQCDPALWELGIPILGVCYGMQLMVQQLGGAVERAERAEYGKASLFINDPTDLFTNVEDGTTMWMSHADSVLRMPEGFELLAHTENTPCAAIAHHSRHLYGVQFHPEVVHSRGGMALLRNFVYHICGCEPEWTTAAFIEEAIREVRARVGDKRVLLALSGGVDSSTLAFLLHRAIGDNLTCMFIDQGFMRKNEPERLVKLFKEQFHIPVAYVDAAERFIVRLEGVSDPEQKRKIIGAEFIRVFESESQRLGPFDYLAQGTLYPDIIESAGENIDPKTGERVAVKIKSHHNVGGLPENLRFKLVEPLKRLFKDEVRQVGRALGLPEEIVQRQPFPGPGLAIRVLGELTKDKVDILREADFILRQEVNRSGRYNDYWQSFAVLLPVKTVGVMGDRRTYAYALALRFVTSEDGMTADWARVPYDLLEQIANRIVNEVPGINRVVLDITSKPPGTIEWE.

The disordered stretch occupies residues Met1–Ala28. The segment covering Val19–Ala28 has biased composition (polar residues). Residues Met37–Glu227 enclose the Glutamine amidotransferase type-1 domain. The active-site Nucleophile is the Cys114. Active-site residues include His201 and Glu203. A GMPS ATP-PPase domain is found at Trp228 to Arg426. Ser255 to Ser261 lines the ATP pocket.

As to quaternary structure, homodimer.

The enzyme catalyses XMP + L-glutamine + ATP + H2O = GMP + L-glutamate + AMP + diphosphate + 2 H(+). It functions in the pathway purine metabolism; GMP biosynthesis; GMP from XMP (L-Gln route): step 1/1. Catalyzes the synthesis of GMP from XMP. The polypeptide is GMP synthase [glutamine-hydrolyzing] (Gloeobacter violaceus (strain ATCC 29082 / PCC 7421)).